A 430-amino-acid polypeptide reads, in one-letter code: Adenylosuccinate synthetase (430 aa).

GTP is bound by residues 11 to 17 (GDEGKGK) and 39 to 41 (GHT). Catalysis depends on aspartate 12, which acts as the Proton acceptor. Mg(2+)-binding residues include aspartate 12 and glycine 39. IMP contacts are provided by residues 12-15 (DEGK), 37-40 (NAGH), threonine 130, arginine 144, asparagine 226, threonine 241, and arginine 305. The active-site Proton donor is histidine 40. Position 301–307 (301–307 (VTTGRKR)) interacts with substrate. Residues arginine 307, 333 to 335 (KLD), and 415 to 417 (GTG) each bind GTP.

This sequence belongs to the adenylosuccinate synthetase family. Homodimer. Mg(2+) is required as a cofactor.

It localises to the cytoplasm. The catalysed reaction is IMP + L-aspartate + GTP = N(6)-(1,2-dicarboxyethyl)-AMP + GDP + phosphate + 2 H(+). Its pathway is purine metabolism; AMP biosynthesis via de novo pathway; AMP from IMP: step 1/2. Functionally, plays an important role in the de novo pathway and in the salvage pathway of purine nucleotide biosynthesis. Catalyzes the first committed step in the biosynthesis of AMP from IMP. The chain is Adenylosuccinate synthetase from Scheffersomyces stipitis (strain ATCC 58785 / CBS 6054 / NBRC 10063 / NRRL Y-11545) (Yeast).